Consider the following 119-residue polypeptide: Ribonuclease P protein component (119 aa).

Belongs to the RnpA family. Consists of a catalytic RNA component (M1 or rnpB) and a protein subunit.

The catalysed reaction is Endonucleolytic cleavage of RNA, removing 5'-extranucleotides from tRNA precursor.. Its function is as follows. RNaseP catalyzes the removal of the 5'-leader sequence from pre-tRNA to produce the mature 5'-terminus. It can also cleave other RNA substrates such as 4.5S RNA. The protein component plays an auxiliary but essential role in vivo by binding to the 5'-leader sequence and broadening the substrate specificity of the ribozyme. The protein is Ribonuclease P protein component of Pediococcus pentosaceus (strain ATCC 25745 / CCUG 21536 / LMG 10740 / 183-1w).